The sequence spans 373 residues: Dual-specificity RNA methyltransferase RlmN (373 aa).

Glu94 serves as the catalytic Proton acceptor. The 240-residue stretch at 100–339 (EDDRATLCVS…VIVRKTRGDD (240 aa)) folds into the Radical SAM core domain. A disulfide bridge connects residues Cys107 and Cys344. 3 residues coordinate [4Fe-4S] cluster: Cys114, Cys118, and Cys121. S-adenosyl-L-methionine contacts are provided by residues 168–169 (GE), Ser200, 222–224 (SIH), and Asn301. The active-site S-methylcysteine intermediate is Cys344.

It belongs to the radical SAM superfamily. RlmN family. [4Fe-4S] cluster serves as cofactor.

The protein localises to the cytoplasm. The catalysed reaction is adenosine(2503) in 23S rRNA + 2 reduced [2Fe-2S]-[ferredoxin] + 2 S-adenosyl-L-methionine = 2-methyladenosine(2503) in 23S rRNA + 5'-deoxyadenosine + L-methionine + 2 oxidized [2Fe-2S]-[ferredoxin] + S-adenosyl-L-homocysteine. The enzyme catalyses adenosine(37) in tRNA + 2 reduced [2Fe-2S]-[ferredoxin] + 2 S-adenosyl-L-methionine = 2-methyladenosine(37) in tRNA + 5'-deoxyadenosine + L-methionine + 2 oxidized [2Fe-2S]-[ferredoxin] + S-adenosyl-L-homocysteine. Its function is as follows. Specifically methylates position 2 of adenine 2503 in 23S rRNA and position 2 of adenine 37 in tRNAs. m2A2503 modification seems to play a crucial role in the proofreading step occurring at the peptidyl transferase center and thus would serve to optimize ribosomal fidelity. The protein is Dual-specificity RNA methyltransferase RlmN of Shewanella sp. (strain W3-18-1).